A 220-amino-acid chain; its full sequence is Imidazoleglycerol-phosphate dehydratase (220 aa).

It belongs to the imidazoleglycerol-phosphate dehydratase family.

It carries out the reaction D-erythro-1-(imidazol-4-yl)glycerol 3-phosphate = 3-(imidazol-4-yl)-2-oxopropyl phosphate + H2O. It functions in the pathway amino-acid biosynthesis; L-histidine biosynthesis; L-histidine from 5-phospho-alpha-D-ribose 1-diphosphate: step 6/9. The protein is Imidazoleglycerol-phosphate dehydratase (HIS3) of Eremothecium gossypii (strain ATCC 10895 / CBS 109.51 / FGSC 9923 / NRRL Y-1056) (Yeast).